A 39-amino-acid chain; its full sequence is Beta-theraphotoxin-Cm2a (39 aa).

Cystine bridges form between Cys-7-Cys-21, Cys-14-Cys-26, and Cys-20-Cys-33. Phenylalanine amide is present on Phe-39.

As to expression, expressed by the venom gland.

The protein resides in the secreted. Its function is as follows. Inhibits mammalian voltage-gated sodium channel subtypes Nav1.5/SCN5A and Nav1.8/SCN10A by shifting the voltage dependence of channel activation to more depolarized potentials and by blocking the inward component of the sodium current. In vivo, this toxin causes erect, elevated tail, initial partial ataxia, followed by recovery over approximately 1 hour after injection and the progressive development of shaking. Although paralysis subsides, the body tremors never cease and persist until the end of the experiment. This Ceratogyrus marshalli (Straighthorned baboon tarantula) protein is Beta-theraphotoxin-Cm2a.